Here is a 401-residue protein sequence, read N- to C-terminus: Argininosuccinate synthase (401 aa).

Residue 9–17 participates in ATP binding; it reads AYSGGLDTS. Tyrosine 86 serves as a coordination point for L-citrulline. ATP is bound at residue glycine 116. Residues threonine 118, asparagine 122, and aspartate 123 each coordinate L-aspartate. Position 122 (asparagine 122) interacts with L-citrulline. Arginine 126, serine 174, serine 183, glutamate 259, and tyrosine 271 together coordinate L-citrulline.

Belongs to the argininosuccinate synthase family. Type 1 subfamily. Homotetramer.

The protein resides in the cytoplasm. The catalysed reaction is L-citrulline + L-aspartate + ATP = 2-(N(omega)-L-arginino)succinate + AMP + diphosphate + H(+). It participates in amino-acid biosynthesis; L-arginine biosynthesis; L-arginine from L-ornithine and carbamoyl phosphate: step 2/3. In Bacillus cereus (strain B4264), this protein is Argininosuccinate synthase.